The following is a 1170-amino-acid chain: PAN2-PAN3 deadenylation complex catalytic subunit PAN2 (1170 aa).

WD repeat units lie at residues 104–144 (ENMK…IIKQ) and 280–319 (NISSYVKLFEIAPSGEALVIGDADCNIHLWGSPTKIHFTD). The interval 319–458 (DMAIPIELPE…DPNEIESLKP (140 aa)) is linker. The segment at 399-459 (RRNQVEDTRN…PNEIESLKPE (61 aa)) is disordered. The segment covering 443-452 (VDQEPEDPNE) has biased composition (acidic residues). The region spanning 459–846 (EAPPLYRNLE…MPAVLLFQIK (388 aa)) is the USP domain. Residues 894–1067 (VALDTEFVSL…EDARTALKLY (174 aa)) enclose the Exonuclease domain. A divalent metal cation-binding residues include Asp-897, Glu-899, Asp-1006, and Asp-1059. Residues 1094–1170 (NFKPPRREDR…PSKASSPLPK (77 aa)) are disordered. Residues 1098 to 1108 (PRREDREKELQ) show a composition bias toward basic and acidic residues. Positions 1109 to 1119 (RQSTPPNSTAP) are enriched in polar residues.

It belongs to the peptidase C19 family. PAN2 subfamily. As to quaternary structure, forms a heterotrimer with an asymmetric homodimer of the regulatory subunit PAN3 to form the poly(A)-nuclease (PAN) deadenylation complex. The cofactor is a divalent metal cation.

It localises to the cytoplasm. It carries out the reaction Exonucleolytic cleavage of poly(A) to 5'-AMP.. Positively regulated by the regulatory subunit PAN3. Catalytic subunit of the poly(A)-nuclease (PAN) deadenylation complex, one of two cytoplasmic mRNA deadenylases involved in mRNA turnover. PAN specifically shortens poly(A) tails of RNA and the activity is stimulated by poly(A)-binding protein PAB1. PAN deadenylation is followed by rapid degradation of the shortened mRNA tails by the CCR4-NOT complex. Deadenylated mRNAs are then degraded by two alternative mechanisms, namely exosome-mediated 3'-5' exonucleolytic degradation, or deadenylation-dependent mRNA decaping and subsequent 5'-3' exonucleolytic degradation by XRN1. May also be involved in post-transcriptional maturation of mRNA poly(A) tails. In Chaetomium thermophilum (strain DSM 1495 / CBS 144.50 / IMI 039719) (Thermochaetoides thermophila), this protein is PAN2-PAN3 deadenylation complex catalytic subunit PAN2.